The following is a 40-amino-acid chain: Spodomicin (40 aa).

Intrachain disulfides connect Cys6-Cys20, Cys10-Cys32, and Cys21-Cys39.

As to quaternary structure, monomer. Contains three disulfide bonds. Hemolymph.

The protein localises to the secreted. Functionally, fungicide. This chain is Spodomicin, found in Spodoptera littoralis (Egyptian cotton leafworm).